Consider the following 95-residue polypeptide: Large ribosomal subunit protein bL27 (95 aa).

Positions 1 to 6 are excised as a propeptide; the sequence is MFLQLF.

The protein belongs to the bacterial ribosomal protein bL27 family. In terms of processing, the N-terminus is cleaved by ribosomal processing cysteine protease Prp.

In Symbiobacterium thermophilum (strain DSM 24528 / JCM 14929 / IAM 14863 / T), this protein is Large ribosomal subunit protein bL27.